We begin with the raw amino-acid sequence, 181 residues long: Alkyl hydroperoxide reductase AhpD (181 aa).

Residue Cys-131 is the Proton donor of the active site. A disulfide bridge links Cys-131 with Cys-134. The active-site Cysteine sulfenic acid (-SOH) intermediate is Cys-134.

The protein belongs to the AhpD family.

It catalyses the reaction N(6)-[(R)-dihydrolipoyl]-L-lysyl-[lipoyl-carrier protein] + a hydroperoxide = N(6)-[(R)-lipoyl]-L-lysyl-[lipoyl-carrier protein] + an alcohol + H2O. Antioxidant protein with alkyl hydroperoxidase activity. Required for the reduction of the AhpC active site cysteine residues and for the regeneration of the AhpC enzyme activity. The sequence is that of Alkyl hydroperoxide reductase AhpD from Rhodopseudomonas palustris (strain BisB18).